The following is a 420-amino-acid chain: D-tagatose-1,6-bisphosphate aldolase subunit GatZ (420 aa).

It belongs to the GatZ/KbaZ family. GatZ subfamily. As to quaternary structure, forms a complex with GatY.

It functions in the pathway carbohydrate metabolism; D-tagatose 6-phosphate degradation; D-glyceraldehyde 3-phosphate and glycerone phosphate from D-tagatose 6-phosphate: step 2/2. Its function is as follows. Component of the tagatose-1,6-bisphosphate aldolase GatYZ that is required for full activity and stability of the Y subunit. Could have a chaperone-like function for the proper and stable folding of GatY. When expressed alone, GatZ does not show any aldolase activity. Is involved in the catabolism of galactitol. The sequence is that of D-tagatose-1,6-bisphosphate aldolase subunit GatZ from Escherichia coli (strain SE11).